The chain runs to 253 residues: 5'-nucleotidase SurE (253 aa).

Positions 8, 9, 39, and 97 each coordinate a divalent metal cation.

The protein belongs to the SurE nucleotidase family. It depends on a divalent metal cation as a cofactor.

Its subcellular location is the cytoplasm. It carries out the reaction a ribonucleoside 5'-phosphate + H2O = a ribonucleoside + phosphate. Nucleotidase that shows phosphatase activity on nucleoside 5'-monophosphates. The protein is 5'-nucleotidase SurE of Aeromonas hydrophila subsp. hydrophila (strain ATCC 7966 / DSM 30187 / BCRC 13018 / CCUG 14551 / JCM 1027 / KCTC 2358 / NCIMB 9240 / NCTC 8049).